We begin with the raw amino-acid sequence, 255 residues long: 5-oxoprolinase subunit A (255 aa).

Belongs to the LamB/PxpA family. Forms a complex composed of PxpA, PxpB and PxpC.

It catalyses the reaction 5-oxo-L-proline + ATP + 2 H2O = L-glutamate + ADP + phosphate + H(+). Its function is as follows. Catalyzes the cleavage of 5-oxoproline to form L-glutamate coupled to the hydrolysis of ATP to ADP and inorganic phosphate. The polypeptide is 5-oxoprolinase subunit A (Campylobacter jejuni subsp. doylei (strain ATCC BAA-1458 / RM4099 / 269.97)).